The following is a 471-amino-acid chain: 3-isopropylmalate dehydratase large subunit (471 aa).

Residues Cys349, Cys409, and Cys412 each coordinate [4Fe-4S] cluster.

It belongs to the aconitase/IPM isomerase family. LeuC type 1 subfamily. Heterodimer of LeuC and LeuD. [4Fe-4S] cluster is required as a cofactor.

It carries out the reaction (2R,3S)-3-isopropylmalate = (2S)-2-isopropylmalate. The protein operates within amino-acid biosynthesis; L-leucine biosynthesis; L-leucine from 3-methyl-2-oxobutanoate: step 2/4. Catalyzes the isomerization between 2-isopropylmalate and 3-isopropylmalate, via the formation of 2-isopropylmaleate. The protein is 3-isopropylmalate dehydratase large subunit of Aliivibrio salmonicida (strain LFI1238) (Vibrio salmonicida (strain LFI1238)).